The chain runs to 683 residues: Long-chain-fatty-acid--CoA ligase 5 (683 aa).

Residues 12 to 32 (LPTPALICLLTFGTAIFLWLI) traverse the membrane as a helical; Signal-anchor for type III membrane protein segment. Topologically, residues 33–683 (NRPQPVLPLI…IKSLYESIEE (651 aa)) are cytoplasmic. Lysine 361 carries the post-translational modification N6-acetyllysine.

Belongs to the ATP-dependent AMP-binding enzyme family. As to expression, expressed most abundantly in the small intestine, and to a much lesser extent in the lung, liver, adrenal gland, adipose tissue and kidney.

The protein localises to the mitochondrion. It is found in the endoplasmic reticulum. It localises to the mitochondrion outer membrane. The protein resides in the endoplasmic reticulum membrane. Its subcellular location is the cell membrane. The enzyme catalyses a long-chain fatty acid + ATP + CoA = a long-chain fatty acyl-CoA + AMP + diphosphate. It carries out the reaction (5Z,8Z,11Z,14Z)-eicosatetraenoate + ATP + CoA = (5Z,8Z,11Z,14Z)-eicosatetraenoyl-CoA + AMP + diphosphate. The catalysed reaction is 15-hydroxy-(5Z,8Z,11Z,13E)-eicosatetraenoate + ATP + CoA = 15-hydroxy-(5Z,8Z,11Z,13E)-eicosatetraenoyl-CoA + AMP + diphosphate. It catalyses the reaction 12-hydroxy-(5Z,8Z,10E,14Z)-eicosatetraenoate + ATP + CoA = 12-hydroxy-(5Z,8Z,10E,14Z)-eicosatetraenoyl-CoA + AMP + diphosphate. The enzyme catalyses 5-hydroxy-(6E,8Z,11Z,14Z)-eicosatetraenoate + ATP + CoA = 5-hydroxy-(6E,8Z,11Z,14Z)-eicosatetraenoyl-CoA + AMP + diphosphate. It carries out the reaction 14,15-epoxy-(5Z,8Z,11Z)-eicosatrienoate + ATP + CoA = 14,15-epoxy-(5Z,8Z,11Z)-eicosatrienoyl-CoA + AMP + diphosphate. The catalysed reaction is 11,12-epoxy-(5Z,8Z,14Z)-eicosatrienoate + ATP + CoA = 11,12-epoxy-(5Z,8Z,14Z)-eicosatrienoyl-CoA + AMP + diphosphate. It catalyses the reaction hexadecanoate + ATP + CoA = hexadecanoyl-CoA + AMP + diphosphate. The enzyme catalyses (E)-hexadec-2-enoate + ATP + CoA = (2E)-hexadecenoyl-CoA + AMP + diphosphate. It carries out the reaction (9Z)-octadecenoate + ATP + CoA = (9Z)-octadecenoyl-CoA + AMP + diphosphate. Its function is as follows. Catalyzes the conversion of long-chain fatty acids to their active form acyl-CoAs for both synthesis of cellular lipids, and degradation via beta-oxidation. ACSL5 may sensitize epithelial cells to apoptosis specifically triggered by the death ligand TRAIL at the villus tip of the crypt-villus axis of the small intestine. May have a role in the survival of glioma cells. May activate fatty acids from exogenous sources for the synthesis of triacylglycerol destined for intracellular storage. It was suggested that it may also stimulate fatty acid oxidation. Utilizes a wide range of saturated fatty acids with a preference for C16-C18 unsaturated fatty acids. The sequence is that of Long-chain-fatty-acid--CoA ligase 5 from Rattus norvegicus (Rat).